Reading from the N-terminus, the 296-residue chain is Nucleotide-binding protein MGAS2096_Spy0550 (296 aa).

13-20 is a binding site for ATP; the sequence is GMSGAGKT. Residue 63 to 66 participates in GTP binding; sequence DMRS.

Belongs to the RapZ-like family.

Displays ATPase and GTPase activities. This Streptococcus pyogenes serotype M12 (strain MGAS2096) protein is Nucleotide-binding protein MGAS2096_Spy0550.